A 63-amino-acid polypeptide reads, in one-letter code: Large ribosomal subunit protein uL29 (63 aa).

The protein belongs to the universal ribosomal protein uL29 family.

The chain is Large ribosomal subunit protein uL29 from Bordetella pertussis (strain Tohama I / ATCC BAA-589 / NCTC 13251).